A 96-amino-acid chain; its full sequence is CKRRDIMKLIEVHSPNLNLLLPAPFDLIELPVRMEVGYEEIANDVRKAASVLVGEIMTKKVRTTKKDASISDAAALMDKHNVNRLPVVDENNKLVL.

The CBS domain occupies 57-96 (MTKKVRTTKKDASISDAAALMDKHNVNRLPVVDENNKLVL).

This is an uncharacterized protein from Methanobacterium ivanovii.